We begin with the raw amino-acid sequence, 169 residues long: GTP-dependent dephospho-CoA kinase (169 aa).

GTP contacts are provided by D45, D64, K66, and E121.

It belongs to the GTP-dependent DPCK family.

It carries out the reaction 3'-dephospho-CoA + GTP = GDP + CoA + H(+). Its pathway is cofactor biosynthesis; coenzyme A biosynthesis. In terms of biological role, catalyzes the GTP-dependent phosphorylation of the 3'-hydroxyl group of dephosphocoenzyme A to form coenzyme A (CoA). This chain is GTP-dependent dephospho-CoA kinase, found in Methanosphaera stadtmanae (strain ATCC 43021 / DSM 3091 / JCM 11832 / MCB-3).